The following is a 509-amino-acid chain: 4-aminobutyrate aminotransferase (509 aa).

Pyridoxal 5'-phosphate is bound at residue 166–167 (GS). Arg223 contacts substrate. The residue at position 363 (Lys363) is an N6-(pyridoxal phosphate)lysine. Thr387 contacts pyridoxal 5'-phosphate.

This sequence belongs to the class-III pyridoxal-phosphate-dependent aminotransferase family. In terms of assembly, homodimer. It depends on pyridoxal 5'-phosphate as a cofactor.

Its subcellular location is the cytoplasm. It carries out the reaction 4-aminobutanoate + 2-oxoglutarate = succinate semialdehyde + L-glutamate. In terms of biological role, deaminates gamma-aminobutyric acid (GABA) to succinate-semialdehyde, which in turn is converted to succinate by the succinate semialdehyde dehydrogenase. Not required for the utilization of GABA as nitrogen source. The polypeptide is 4-aminobutyrate aminotransferase (GATA) (Mycosarcoma maydis (Corn smut fungus)).